The chain runs to 289 residues: 4-hydroxy-tetrahydrodipicolinate synthase (289 aa).

A pyruvate-binding site is contributed by Thr46. The Proton donor/acceptor role is filled by Tyr134. Catalysis depends on Lys162, which acts as the Schiff-base intermediate with substrate. Val204 lines the pyruvate pocket.

Belongs to the DapA family. In terms of assembly, homotetramer; dimer of dimers.

The protein resides in the cytoplasm. The catalysed reaction is L-aspartate 4-semialdehyde + pyruvate = (2S,4S)-4-hydroxy-2,3,4,5-tetrahydrodipicolinate + H2O + H(+). The protein operates within amino-acid biosynthesis; L-lysine biosynthesis via DAP pathway; (S)-tetrahydrodipicolinate from L-aspartate: step 3/4. Catalyzes the condensation of (S)-aspartate-beta-semialdehyde [(S)-ASA] and pyruvate to 4-hydroxy-tetrahydrodipicolinate (HTPA). This is 4-hydroxy-tetrahydrodipicolinate synthase from Bacillus velezensis (strain DSM 23117 / BGSC 10A6 / LMG 26770 / FZB42) (Bacillus amyloliquefaciens subsp. plantarum).